A 120-amino-acid polypeptide reads, in one-letter code: uncharacterized protein (120 aa).

The PRD domain occupies 13–119 (VIDKDICKGM…YGLWMAANEE (107 aa)).

This is an uncharacterized protein from Escherichia coli (strain K12).